Consider the following 462-residue polypeptide: Chromosomal replication initiator protein DnaA (462 aa).

The domain I, interacts with DnaA modulators stretch occupies residues 1 to 84 (MAVSLWQQCI…RFDIGSRPSA (84 aa)). Positions 84 to 125 (AKKPSVPAPIAPTRVANTQTKATVGTTFNVQAEPMANANHRS) are domain II. Residues 126-342 (NINPSYQFDN…GALNRVIANA (217 aa)) are domain III, AAA+ region. The ATP site is built by glycine 170, glycine 172, lysine 173, and threonine 174. The tract at residues 343 to 462 (NFTGRPITID…YANLIRTLSS (120 aa)) is domain IV, binds dsDNA.

The protein belongs to the DnaA family. As to quaternary structure, oligomerizes as a right-handed, spiral filament on DNA at oriC.

The protein localises to the cytoplasm. Plays an essential role in the initiation and regulation of chromosomal replication. ATP-DnaA binds to the origin of replication (oriC) to initiate formation of the DNA replication initiation complex once per cell cycle. Binds the DnaA box (a 9 base pair repeat at the origin) and separates the double-stranded (ds)DNA. Forms a right-handed helical filament on oriC DNA; dsDNA binds to the exterior of the filament while single-stranded (ss)DNA is stabiized in the filament's interior. The ATP-DnaA-oriC complex binds and stabilizes one strand of the AT-rich DNA unwinding element (DUE), permitting loading of DNA polymerase. After initiation quickly degrades to an ADP-DnaA complex that is not apt for DNA replication. Binds acidic phospholipids. The protein is Chromosomal replication initiator protein DnaA of Shewanella baltica (strain OS195).